A 282-amino-acid chain; its full sequence is Pantothenate synthetase (282 aa).

Residue Met30–His37 participates in ATP binding. His37 (proton donor) is an active-site residue. Residue Gln61 participates in (R)-pantoate binding. Beta-alanine is bound at residue Gln61. Position 147–150 (Gly147–Asp150) interacts with ATP. (R)-pantoate is bound at residue Gln153. Residues Val176 and Leu184–Arg187 each bind ATP.

It belongs to the pantothenate synthetase family. Homodimer.

It localises to the cytoplasm. It carries out the reaction (R)-pantoate + beta-alanine + ATP = (R)-pantothenate + AMP + diphosphate + H(+). The protein operates within cofactor biosynthesis; (R)-pantothenate biosynthesis; (R)-pantothenate from (R)-pantoate and beta-alanine: step 1/1. In terms of biological role, catalyzes the condensation of pantoate with beta-alanine in an ATP-dependent reaction via a pantoyl-adenylate intermediate. This is Pantothenate synthetase from Desulfitobacterium hafniense (strain DSM 10664 / DCB-2).